Consider the following 167-residue polypeptide: Leukotoxin-activating lysine-acyltransferase LktC serotype T3 (167 aa).

Residues H22 and D91 contribute to the active site.

The protein belongs to the RTX toxin acyltransferase family.

It localises to the cytoplasm. It carries out the reaction a fatty acyl-[ACP] + L-lysyl-[protein] = N(6)-(fatty acyl)-L-lysyl-[protein] + holo-[ACP] + H(+). Its function is as follows. Involved in fatty acylation of the protoxin (LktA) at two internal lysine residues, thereby converting it to the active toxin. The protein is Leukotoxin-activating lysine-acyltransferase LktC serotype T3 (lktC) of Mannheimia haemolytica (Pasteurella haemolytica).